The primary structure comprises 74 residues: ATP synthase F(1) complex subunit epsilon, mitochondrial (74 aa).

Belongs to the eukaryotic ATPase epsilon family. In terms of assembly, component of the ATP synthase complex composed at least of ATP5F1A/subunit alpha, ATP5F1B/subunit beta, ATP5MC1/subunit c (homooctomer), MT-ATP6/subunit a, MT-ATP8/subunit 8, ATP5ME/subunit e, ATP5MF/subunit f, ATP5MG/subunit g, ATP5MK/subunit k, ATP5MJ/subunit j, ATP5F1C/subunit gamma, ATP5F1D/subunit delta, ATP5F1E/subunit epsilon, ATP5PF/subunit F6, ATP5PB/subunit b, ATP5PD/subunit d, ATP5PO/subunit OSCP. ATP synthase complex consists of a soluble F(1) head domain (subunits alpha(3) and beta(3)) - the catalytic core - and a membrane F(0) domain - the membrane proton channel (subunits c, a, 8, e, f, g, k and j). These two domains are linked by a central stalk (subunits gamma, delta, and epsilon) rotating inside the F1 region and a stationary peripheral stalk (subunits F6, b, d, and OSCP).

It is found in the mitochondrion. It localises to the mitochondrion inner membrane. Its function is as follows. Subunit epsilon, of the mitochondrial membrane ATP synthase complex (F(1)F(0) ATP synthase or Complex V) that produces ATP from ADP in the presence of a proton gradient across the membrane which is generated by electron transport complexes of the respiratory chain. ATP synthase complex consist of a soluble F(1) head domain - the catalytic core - and a membrane F(1) domain - the membrane proton channel. These two domains are linked by a central stalk rotating inside the F(1) region and a stationary peripheral stalk. During catalysis, ATP synthesis in the catalytic domain of F(1) is coupled via a rotary mechanism of the central stalk subunits to proton translocation. In vivo, can only synthesize ATP although its ATP hydrolase activity can be activated artificially in vitro. May be essential for the assembly of F(1) and may play an important role in the incorporation of the hydrophobic subunit c into the F(1)-c oligomer rotor of the mitochondrial ATP synthase complex. The polypeptide is ATP synthase F(1) complex subunit epsilon, mitochondrial (Dictyostelium discoideum (Social amoeba)).